Consider the following 87-residue polypeptide: Beta-mammal toxin Css4 (87 aa).

An N-terminal signal peptide occupies residues Met1–Ala19. An LCN-type CS-alpha/beta domain is found at Lys20–Asn85. Disulfide bonds link Cys31-Cys84, Cys35-Cys60, Cys44-Cys65, and Cys48-Cys67. Asn85 is subject to Asparagine amide.

It belongs to the long (4 C-C) scorpion toxin superfamily. Sodium channel inhibitor family. Beta subfamily. In terms of tissue distribution, expressed by the venom gland.

It localises to the secreted. In terms of biological role, beta toxins bind voltage-independently at site-4 of sodium channels (Nav) and shift the voltage of activation toward more negative potentials thereby affecting sodium channel activation and promoting spontaneous and repetitive firing. This toxin is active only on mammals. This Centruroides suffusus (Durango bark scorpion) protein is Beta-mammal toxin Css4.